A 21-amino-acid chain; its full sequence is Brevinin-2-related peptide (21 aa).

The residue at position 21 (leucine 21) is a Leucine amide.

Expressed by the skin glands.

The protein resides in the secreted. In terms of biological role, antimicrobial peptide with activity against Gram-negative and Gram-positive bacteria (MIC=13 uM against E.coli, MIC=25 uM against S.aureus) and fungi (MIC=25 uM against C.albicans). Also shows hemolytic activity (HC(50)=50 uM). In vitro, shows moderate inhibitory activity against HIV. In Lithobates septentrionalis (Mink frog), this protein is Brevinin-2-related peptide.